The sequence spans 210 residues: HTH-type transcriptional repressor ComR (210 aa).

In terms of domain architecture, HTH tetR-type spans 18 to 78; sequence VFDRDAALDK…AVLDRYIDRF (61 aa). The segment at residues 41–60 is a DNA-binding region (H-T-H motif); it reads SLADLVEATGAKAPTLYAEF.

With respect to regulation, binding to the promoter region of BhsA/ComC is released in the presence of copper. In terms of biological role, represses expression of BhsA/ComC by binding to its promoter region in the absence of copper. This is HTH-type transcriptional repressor ComR (comR) from Escherichia coli (strain K12).